The following is a 973-amino-acid chain: ATP-dependent DNA helicase Q5 (973 aa).

The 175-residue stretch at 39–213 (MAVVKGDKDV…FAALHLKQPV (175 aa)) folds into the Helicase ATP-binding domain. 52–59 (MPTGAGKS) is an ATP binding site. The DEAH box signature appears at 157-160 (DEAH). One can recognise a Helicase C-terminal domain in the interval 241–398 (NLRDFCLKAL…NKPSDKATLL (158 aa)). Residues Cys-412, Cys-428, Cys-432, and Cys-435 each coordinate Zn(2+). A phosphoserine mark is found at Ser-489 and Ser-492. The interval 491 to 621 (GSGDEGRDEA…ASKDGQLYDM (131 aa)) is interaction with POLR2A. Disordered regions lie at residues 518–538 (GKEA…LRDA), 679–795 (TEKL…VPGK), and 822–884 (CSLE…AREP). Position 527 is a phosphothreonine (Thr-527). The interval 653–726 (PKRVGAGFSK…APGSRTNCGD (74 aa)) is interaction with RAD51. Ser-728 bears the Phosphoserine; by CDK1 mark. Residues 840–856 (TQAEKRPRPQQESQEKR) show a composition bias toward basic and acidic residues. Residues 863-878 (PSTNSSALASDPSTEN) show a composition bias toward polar residues.

The protein belongs to the helicase family. RecQ subfamily. In terms of assembly, monomer. Interacts with TOP2A, TOP3A and TOP3B. Interacts with RNA polymerase II subunit POLR2A. Identified in a complex with the RNA polymerase II core bound to DNA. Interacts with RAD51. Interacts with WRN; this interaction stimulates WRN helicase activity on DNA fork duplexes. Interacts with MUS1; this interaction promotes MUS81-dependent mitotic DNA synthesis. It depends on Zn(2+) as a cofactor. Phosphorylated by CDK1 at Ser-728; this phosphorylation is required for RECQL5-mediated disruption of RAD51 filaments on stalled replication forks.

It localises to the nucleus. The protein resides in the nucleoplasm. The catalysed reaction is Couples ATP hydrolysis with the unwinding of duplex DNA by translocating in the 3'-5' direction.. It carries out the reaction ATP + H2O = ADP + phosphate + H(+). Functionally, DNA helicase that plays an important role in DNA replication, transcription and repair. Binds to the RNA polymerase II subunit POLR2A during transcription elongation and suppresses transcription-associated genomic instability. Also associates with POLR1A and enforces the stability of ribosomal DNA arrays. Plays an important role in mitotic chromosome separation after cross-over events and cell cycle progress. Mechanistically, removes RAD51 filaments protecting stalled replication forks at common fragile sites and stimulates MUS81-EME1 endonuclease leading to mitotic DNA synthesis. Required for efficient DNA repair, including repair of inter-strand cross-links. Stimulates DNA decatenation mediated by TOP2A. Prevents sister chromatid exchange and homologous recombination. The chain is ATP-dependent DNA helicase Q5 (Recql5) from Rattus norvegicus (Rat).